Consider the following 447-residue polypeptide: Na(+)-translocating NADH-quinone reductase subunit A (447 aa).

This sequence belongs to the NqrA family. In terms of assembly, composed of six subunits; NqrA, NqrB, NqrC, NqrD, NqrE and NqrF.

The enzyme catalyses a ubiquinone + n Na(+)(in) + NADH + H(+) = a ubiquinol + n Na(+)(out) + NAD(+). In terms of biological role, NQR complex catalyzes the reduction of ubiquinone-1 to ubiquinol by two successive reactions, coupled with the transport of Na(+) ions from the cytoplasm to the periplasm. NqrA to NqrE are probably involved in the second step, the conversion of ubisemiquinone to ubiquinol. This Yersinia pestis protein is Na(+)-translocating NADH-quinone reductase subunit A.